We begin with the raw amino-acid sequence, 181 residues long: Ras-like protein 1 (181 aa).

10-17 (GAGGVGKS) lines the GTP pocket. Residues 32–40 (YDPTIEDSY) carry the Effector region motif. Residues 57 to 61 (DTAGQ) and 116 to 119 (NKCD) contribute to the GTP site. Cys-178 carries the post-translational modification Cysteine methyl ester. Cys-178 is lipidated: S-geranylgeranyl cysteine. A propeptide spans 179-181 (KML) (removed in mature form).

This sequence belongs to the small GTPase superfamily. Ras family.

It is found in the cell membrane. It catalyses the reaction GTP + H2O = GDP + phosphate + H(+). With respect to regulation, alternates between an inactive form bound to GDP and an active form bound to GTP. Activated by a guanine nucleotide-exchange factor (GEF) and inactivated by a GTPase-activating protein (GAP). In terms of biological role, ras proteins bind GDP/GTP and possess intrinsic GTPase activity. Plays a role in eye development by regulating cell growth, survival of postmitotic ommatidial cells and differentiation of photoreceptor cells. During larval development, mediates Ptth/tor signaling leading to the production of ecdysone, a hormone required for the initiation of metamorphosis. This is Ras-like protein 1 from Drosophila mojavensis (Fruit fly).